A 434-amino-acid polypeptide reads, in one-letter code: Enolase (434 aa).

Residue Gln-163 coordinates (2R)-2-phosphoglycerate. The active-site Proton donor is Glu-205. Residues Asp-242, Glu-289, and Asp-316 each coordinate Mg(2+). Residues Lys-341, Arg-370, Ser-371, and Lys-392 each contribute to the (2R)-2-phosphoglycerate site. Catalysis depends on Lys-341, which acts as the Proton acceptor.

It belongs to the enolase family. Mg(2+) is required as a cofactor.

The protein resides in the cytoplasm. It localises to the secreted. The protein localises to the cell surface. The enzyme catalyses (2R)-2-phosphoglycerate = phosphoenolpyruvate + H2O. Its pathway is carbohydrate degradation; glycolysis; pyruvate from D-glyceraldehyde 3-phosphate: step 4/5. Catalyzes the reversible conversion of 2-phosphoglycerate (2-PG) into phosphoenolpyruvate (PEP). It is essential for the degradation of carbohydrates via glycolysis. The sequence is that of Enolase from Lacticaseibacillus casei (strain BL23) (Lactobacillus casei).